A 328-amino-acid polypeptide reads, in one-letter code: Malate dehydrogenase (328 aa).

An NAD(+)-binding site is contributed by 11–17 (GAAGQIG). Positions 92 and 98 each coordinate substrate. NAD(+)-binding positions include asparagine 105, glutamine 112, and 129 to 131 (VGN). Residues asparagine 131 and arginine 162 each coordinate substrate. The active-site Proton acceptor is the histidine 187.

The protein belongs to the LDH/MDH superfamily. MDH type 2 family.

It catalyses the reaction (S)-malate + NAD(+) = oxaloacetate + NADH + H(+). Functionally, catalyzes the reversible oxidation of malate to oxaloacetate. The protein is Malate dehydrogenase of Coxiella burnetii (strain CbuG_Q212) (Coxiella burnetii (strain Q212)).